Here is a 93-residue protein sequence, read N- to C-terminus: Conotoxin F_Vc1 (93 aa).

The first 22 residues, 1 to 22 (MQRGAVLLGVVAFLALWPQAGA), serve as a signal peptide directing secretion. Positions 23–33 (EPYNLNDPDVR) are excised as a propeptide.

The protein belongs to the conotoxin F superfamily. Contains 4 disulfide bonds. In terms of tissue distribution, expressed by the venom duct.

It localises to the secreted. This is Conotoxin F_Vc1 from Conus victoriae (Queen Victoria cone).